Reading from the N-terminus, the 345-residue chain is S-adenosylmethionine:tRNA ribosyltransferase-isomerase (345 aa).

It belongs to the QueA family. As to quaternary structure, monomer.

It is found in the cytoplasm. The catalysed reaction is 7-aminomethyl-7-carbaguanosine(34) in tRNA + S-adenosyl-L-methionine = epoxyqueuosine(34) in tRNA + adenine + L-methionine + 2 H(+). Its pathway is tRNA modification; tRNA-queuosine biosynthesis. Transfers and isomerizes the ribose moiety from AdoMet to the 7-aminomethyl group of 7-deazaguanine (preQ1-tRNA) to give epoxyqueuosine (oQ-tRNA). This is S-adenosylmethionine:tRNA ribosyltransferase-isomerase from Helicobacter pylori (strain G27).